The primary structure comprises 336 residues: MSTTQGGSNQQDETRRELIIQKFKLFRREGNNLEFVDQSGQKLRCPICGNTVFIEDAERGQIVCASCGYVLMEHILDTGPEWRAFTPEEKEDRARTGGPLERVTSEELVTRIETTLKSPDLKKKLEILKYKKWQQRIRVQTSYERNLVQATHELNRIAHQLGVPKSCMDEALAVYKQVLKSGLVKGRSVEAIIAACLHMACRMQGMPRSLDEISQYTRAPRKEIARCFRLIARELRIRLPLSDPRQYVPKIVEQLKLPGDIAKEAIRVLEEAKDKGLTAGKDPAGLAAAAVYIASLLKGEVRTQKEIAQAAQVTEVTVRNRYKELAKELNIKIPIK.

The TFIIB-type zinc-finger motif lies at 41–72; sequence QKLRCPICGNTVFIEDAERGQIVCASCGYVLM. Cys45, Cys48, Cys64, and Cys67 together coordinate Zn(2+). A run of 2 repeats spans residues 152-235 and 246-327.

It belongs to the TFIIB family.

Its function is as follows. Stabilizes TBP binding to an archaeal box-A promoter. Also responsible for recruiting RNA polymerase II to the pre-initiation complex (DNA-TBP-TFIIB). This Caldivirga maquilingensis (strain ATCC 700844 / DSM 13496 / JCM 10307 / IC-167) protein is Transcription initiation factor IIB.